Consider the following 594-residue polypeptide: DNA ligase (594 aa).

Glutamate 256 contributes to the ATP binding site. Catalysis depends on lysine 258, which acts as the N6-AMP-lysine intermediate. ATP-binding residues include arginine 263, arginine 279, glutamate 309, phenylalanine 349, arginine 426, and lysine 432.

This sequence belongs to the ATP-dependent DNA ligase family. Requires Mg(2+) as cofactor.

It carries out the reaction ATP + (deoxyribonucleotide)n-3'-hydroxyl + 5'-phospho-(deoxyribonucleotide)m = (deoxyribonucleotide)n+m + AMP + diphosphate.. DNA ligase that seals nicks in double-stranded DNA during DNA replication, DNA recombination and DNA repair. The polypeptide is DNA ligase (Ignicoccus hospitalis (strain KIN4/I / DSM 18386 / JCM 14125)).